Consider the following 315-residue polypeptide: Probable carboxylesterase 3 (315 aa).

M1 bears the N-acetylmethionine mark. The short motif at 81–83 (HGG) is the Involved in the stabilization of the negatively charged intermediate by the formation of the oxyanion hole element. Active-site residues include S160, D258, and H290.

This sequence belongs to the 'GDXG' lipolytic enzyme family. As to expression, expressed in flowers and siliques.

It carries out the reaction a carboxylic ester + H2O = an alcohol + a carboxylate + H(+). In terms of biological role, carboxylesterase acting on esters with varying acyl chain length. This chain is Probable carboxylesterase 3 (CXE3), found in Arabidopsis thaliana (Mouse-ear cress).